Reading from the N-terminus, the 563-residue chain is Autotransporter BimA (563 aa).

A disordered region spans residues 1–20; the sequence is MKYRRLSLAHARQDSGQAAS. The signal sequence occupies residues 1–48; sequence MKYRRLSLAHARQDSGQAASNARSRRFARLLCSSIAPLALGFSADAFA. The surface exposed passenger domain stretch occupies residues 61-472; that stretch reads APNDAHGNLL…NLAISNSNAY (412 aa). The WH2 domain maps to 65–82; it reads AHGNLLDEIRRGVPLRHV. Residues 96 to 130 form a central and acidic domains region; the sequence is TLADAMRRVIDSRRTAFDSPPATPASPSPSWSDDE. The tract at residues 109 to 350 is disordered; sequence RTAFDSPPAT…PARPGGGQFT (242 aa). 3 stretches are compositionally biased toward low complexity: residues 138 to 150, 162 to 197, and 211 to 227; these read ATRPASRPESAAR, PASAESPSPRSPDASPSRTPSPTFSFPSPSRTSTPR, and SPAASPRVASPRSAHSR. Composition is skewed to polar residues over residues 228-238 and 269-281; these read GSTQPPSNLST and SRGSTQPPSNLST. Residues 473–509 form an outer membrane translocation of the passenger domain region; it reads TNQRIGDLQQSITETARDAYSGVAAATALTMIPDVDR. Beta stranded transmembrane passes span 510–519, 525–536, 543–549, and 553–563; these read DKMLSIGVGG, HRAVALGGTARI, RAGVAMS, and NTVGVGMSWQW. The tract at residues 510–563 is translocator domain; that stretch reads DKMLSIGVGGAVYKGHRAVALGGTARIGENLKVRAGVAMSAGGNTVGVGMSWQW.

Belongs to the autotransporter-2 (AT-2) (TC 1.B.40) family. In terms of assembly, homotrimer. Interacts with host G-actin; the interaction is direct. Interacts (via central and acidic domains) with host ACTR2/ARP2 and ACTR3/ARP3.

Its subcellular location is the cell outer membrane. It localises to the cell surface. In terms of biological role, during host cell infection, required for actin-based intracellular motility. Mediates actin tail formation at one pole of the bacteria surface by recruiting host Arp2/3 (ACTR3/ARP3-ACTR2/ARP2) which leads to actin polymerization which provides the propulsive force for intracellular movement and intercellular dissemination of the bacterium. This chain is Autotransporter BimA, found in Burkholderia thailandensis (strain ATCC 700388 / DSM 13276 / CCUG 48851 / CIP 106301 / E264).